The following is a 238-amino-acid chain: Oxidoreductase dmxR7 (238 aa).

Belongs to the avfA family.

Its pathway is secondary metabolite biosynthesis. Its function is as follows. Oxidoreductase; part of the gene cluster that mediates the biosynthesis of the dimeric xanthones cryptosporioptides. The pathway begins with the synthesis of atrochrysone thioester by the polyketide synthase dmx-nrPKS. The atrochrysone carboxyl ACP thioesterase dmxR1 then breaks the thioester bond and releases the atrochrysone carboxylic acid from dmx-nrPKS. Atrochrysone carboxylic acid is decarboxylated by the decarboxylase dmxR15, and oxidized by the anthrone oxygenase dmxR16 to yield emodin. Emodin is then reduced to emodin hydroquinone by the oxidoreductase dmxR7. A-ring reduction by the short chain dehydrogenase dmxR18, dehydration by the scytalone dehydratase-like protein dmxR17 and probable spontaneous re-oxidation, results in overall deoxygenation to chrysophanol. Baeyer-Villiger oxidation by the Baeyer-Villiger monooxygenase (BVMO) dmxR6 then yields monodictylactone in equilibrium with monodictyphenone. In the case of the cryptosporioptides biosynthesis, monodictylactone is reduced at C-12 to an alcohol (by the short chain dehydrogenases dmxR12 or dmxR8) and hydroxylated at C-5 by dmxR9, yielding the electron-rich aromatic which could eliminate H(2)O to form the ortho-quinonemethide, followed by tautomerisation to paraquinone and complete the formal reduction to produce the 10-methylgroup. Conjugate addition of C-4a-OH to the resulting paraquinone by the monooxygenase dmxR10 then gives cyclohexadienone, which is then reduced at C-5 by the short chain dehydrogenase dmxR3 to give the dihydroxanthone. The 6,7-epoxide in the cryptosporioptides could be introduced by the cytochrome P450 monooxygenase dmxL3. The highly reducing PKS dmxL2 manufactures butyrate, which is further carboxylated by dmxL1 to form ethylmalonate. It is not yet clear whether the carboxylation occurs while the butyrate is attached to the ACP of dmxL2, but this unusual fungal metabolite could then be esterified to O-5 by the O-acetyltransferase dmxR13. Finally, dimerization performed by dmxR5 gives the observed dimers cryptosporioptides A, B and C as the final products of the pathway. This is Oxidoreductase dmxR7 from Cryptosporiopsis sp. (strain 8999).